The sequence spans 324 residues: 4-hydroxy-3-methylbut-2-enyl diphosphate reductase (324 aa).

Cys-13 contributes to the [4Fe-4S] cluster binding site. His-41 and His-75 together coordinate (2E)-4-hydroxy-3-methylbut-2-enyl diphosphate. Residues His-41 and His-75 each contribute to the dimethylallyl diphosphate site. Positions 41 and 75 each coordinate isopentenyl diphosphate. Position 97 (Cys-97) interacts with [4Fe-4S] cluster. A (2E)-4-hydroxy-3-methylbut-2-enyl diphosphate-binding site is contributed by His-125. His-125 contacts dimethylallyl diphosphate. His-125 lines the isopentenyl diphosphate pocket. Glu-127 acts as the Proton donor in catalysis. A (2E)-4-hydroxy-3-methylbut-2-enyl diphosphate-binding site is contributed by Thr-168. Cys-225 lines the [4Fe-4S] cluster pocket. (2E)-4-hydroxy-3-methylbut-2-enyl diphosphate-binding residues include Ser-253, Ser-254, Asn-255, and Ser-302. 4 residues coordinate dimethylallyl diphosphate: Ser-253, Ser-254, Asn-255, and Ser-302. Residues Ser-253, Ser-254, Asn-255, and Ser-302 each coordinate isopentenyl diphosphate.

Belongs to the IspH family. [4Fe-4S] cluster serves as cofactor.

It catalyses the reaction isopentenyl diphosphate + 2 oxidized [2Fe-2S]-[ferredoxin] + H2O = (2E)-4-hydroxy-3-methylbut-2-enyl diphosphate + 2 reduced [2Fe-2S]-[ferredoxin] + 2 H(+). It carries out the reaction dimethylallyl diphosphate + 2 oxidized [2Fe-2S]-[ferredoxin] + H2O = (2E)-4-hydroxy-3-methylbut-2-enyl diphosphate + 2 reduced [2Fe-2S]-[ferredoxin] + 2 H(+). The protein operates within isoprenoid biosynthesis; dimethylallyl diphosphate biosynthesis; dimethylallyl diphosphate from (2E)-4-hydroxy-3-methylbutenyl diphosphate: step 1/1. It functions in the pathway isoprenoid biosynthesis; isopentenyl diphosphate biosynthesis via DXP pathway; isopentenyl diphosphate from 1-deoxy-D-xylulose 5-phosphate: step 6/6. In terms of biological role, catalyzes the conversion of 1-hydroxy-2-methyl-2-(E)-butenyl 4-diphosphate (HMBPP) into a mixture of isopentenyl diphosphate (IPP) and dimethylallyl diphosphate (DMAPP). Acts in the terminal step of the DOXP/MEP pathway for isoprenoid precursor biosynthesis. The polypeptide is 4-hydroxy-3-methylbut-2-enyl diphosphate reductase (Chlorobium limicola (strain DSM 245 / NBRC 103803 / 6330)).